The chain runs to 178 residues: Large ribosomal subunit protein uL6 (178 aa).

Belongs to the universal ribosomal protein uL6 family. Part of the 50S ribosomal subunit.

Functionally, this protein binds to the 23S rRNA, and is important in its secondary structure. It is located near the subunit interface in the base of the L7/L12 stalk, and near the tRNA binding site of the peptidyltransferase center. In Enterococcus faecalis (strain ATCC 700802 / V583), this protein is Large ribosomal subunit protein uL6.